The chain runs to 259 residues: Imidazole glycerol phosphate synthase subunit HisF (259 aa).

Residues Asp11 and Asp130 contribute to the active site.

The protein belongs to the HisA/HisF family. In terms of assembly, heterodimer of HisH and HisF.

Its subcellular location is the cytoplasm. It carries out the reaction 5-[(5-phospho-1-deoxy-D-ribulos-1-ylimino)methylamino]-1-(5-phospho-beta-D-ribosyl)imidazole-4-carboxamide + L-glutamine = D-erythro-1-(imidazol-4-yl)glycerol 3-phosphate + 5-amino-1-(5-phospho-beta-D-ribosyl)imidazole-4-carboxamide + L-glutamate + H(+). It participates in amino-acid biosynthesis; L-histidine biosynthesis; L-histidine from 5-phospho-alpha-D-ribose 1-diphosphate: step 5/9. Its function is as follows. IGPS catalyzes the conversion of PRFAR and glutamine to IGP, AICAR and glutamate. The HisF subunit catalyzes the cyclization activity that produces IGP and AICAR from PRFAR using the ammonia provided by the HisH subunit. The polypeptide is Imidazole glycerol phosphate synthase subunit HisF (Syntrophobacter fumaroxidans (strain DSM 10017 / MPOB)).